We begin with the raw amino-acid sequence, 201 residues long: Guanylate kinase (201 aa).

The region spanning S2–Q180 is the Guanylate kinase-like domain. Position 9 to 16 (A9 to T16) interacts with ATP.

Belongs to the guanylate kinase family.

It is found in the cytoplasm. It catalyses the reaction GMP + ATP = GDP + ADP. In terms of biological role, essential for recycling GMP and indirectly, cGMP. This chain is Guanylate kinase, found in Nitrosomonas europaea (strain ATCC 19718 / CIP 103999 / KCTC 2705 / NBRC 14298).